The primary structure comprises 233 residues: MKQYFVTGTDTEVGKTYVTCQLLRAANNASLTAIGYKPIAAGCELVNGEWVNEDALNIQQASACANGQTLPINEINPIALTPPIAPHIAANEEGVALTHEKIAEGLNALAAYRPDILLMEGAGGWRLPLTIGSDNTPTHYLSDVVKALKMDVILVVGMRLGCLNHALLTAEAIRADGLIIKGWVANDITGNMTRYQENLRSLKAMLPEPLLAEIPYQTGIEAGTLLSAIEQLS.

Residue 12-17 (EVGKTY) participates in ATP binding. Threonine 16 contacts Mg(2+). The active site involves lysine 37. ATP-binding positions include aspartate 54, 120 to 123 (EGAG), and 186 to 187 (ND). Mg(2+)-binding residues include aspartate 54 and glutamate 120.

The protein belongs to the dethiobiotin synthetase family. In terms of assembly, homodimer. Mg(2+) serves as cofactor.

The protein resides in the cytoplasm. It carries out the reaction (7R,8S)-7,8-diammoniononanoate + CO2 + ATP = (4R,5S)-dethiobiotin + ADP + phosphate + 3 H(+). It participates in cofactor biosynthesis; biotin biosynthesis; biotin from 7,8-diaminononanoate: step 1/2. Its function is as follows. Catalyzes a mechanistically unusual reaction, the ATP-dependent insertion of CO2 between the N7 and N8 nitrogen atoms of 7,8-diaminopelargonic acid (DAPA, also called 7,8-diammoniononanoate) to form a ureido ring. This chain is ATP-dependent dethiobiotin synthetase BioD, found in Alteromonas mediterranea (strain DSM 17117 / CIP 110805 / LMG 28347 / Deep ecotype).